The chain runs to 390 residues: Multidrug export protein EmrA (390 aa).

The Cytoplasmic segment spans residues Met1–Leu24. Residues Leu25–Val45 traverse the membrane as a helical segment. At Leu46 to Gly390 the chain is on the periplasmic side. Residues Ile120 to Gln180 adopt a coiled-coil conformation.

Belongs to the membrane fusion protein (MFP) (TC 8.A.1) family. Homodimer and homotrimer. Part of the tripartite efflux system EmrAB-TolC, which is composed of an inner membrane transporter, EmrB, a periplasmic membrane fusion protein, EmrA, and an outer membrane component, TolC. The complex forms a large protein conduit and can translocate molecules across both the inner and outer membranes. Interacts with EmrB. EmrAB complex forms a dimer in vitro.

The protein resides in the cell inner membrane. Functionally, part of the tripartite efflux system EmrAB-TolC, which confers resistance to antibiotics such as CCCP, FCCP, 2,4-dinitrophenol and nalidixic acid. EmrA is a drug-binding protein that provides a physical link between EmrB and TolC. The chain is Multidrug export protein EmrA (emrA) from Escherichia coli (strain K12).